A 424-amino-acid polypeptide reads, in one-letter code: Dihydroorotase (424 aa).

Zn(2+)-binding residues include H61 and H63. Substrate-binding positions include 63 to 65 (HLR) and N95. Positions 153, 180, and 233 each coordinate Zn(2+). Residue N279 coordinates substrate. D306 serves as a coordination point for Zn(2+). D306 is a catalytic residue. H310 is a binding site for substrate.

Belongs to the metallo-dependent hydrolases superfamily. DHOase family. Class I DHOase subfamily. The cofactor is Zn(2+).

It catalyses the reaction (S)-dihydroorotate + H2O = N-carbamoyl-L-aspartate + H(+). It functions in the pathway pyrimidine metabolism; UMP biosynthesis via de novo pathway; (S)-dihydroorotate from bicarbonate: step 3/3. Its function is as follows. Catalyzes the reversible cyclization of carbamoyl aspartate to dihydroorotate. The polypeptide is Dihydroorotase (Geobacter metallireducens (strain ATCC 53774 / DSM 7210 / GS-15)).